Here is a 249-residue protein sequence, read N- to C-terminus: 5'-nucleotidase SurE (249 aa).

Residues Asp-8, Asp-9, Ser-39, and Asn-91 each contribute to the a divalent metal cation site.

Belongs to the SurE nucleotidase family. Requires a divalent metal cation as cofactor.

The protein resides in the cytoplasm. It carries out the reaction a ribonucleoside 5'-phosphate + H2O = a ribonucleoside + phosphate. In terms of biological role, nucleotidase that shows phosphatase activity on nucleoside 5'-monophosphates. This chain is 5'-nucleotidase SurE, found in Pseudomonas aeruginosa (strain UCBPP-PA14).